The primary structure comprises 351 residues: Spermidine/putrescine import ATP-binding protein PotA (351 aa).

Residues 6 to 236 (LELRNVTKEY…PENAWVANFI (231 aa)) enclose the ABC transporter domain. Position 38–45 (38–45 (GPSGCGKT)) interacts with ATP.

Belongs to the ABC transporter superfamily. Spermidine/putrescine importer (TC 3.A.1.11.1) family. As to quaternary structure, the complex is composed of two ATP-binding proteins (PotA), two transmembrane proteins (PotB and PotC) and a solute-binding protein (PotD).

The protein localises to the cell membrane. The enzyme catalyses ATP + H2O + polyamine-[polyamine-binding protein]Side 1 = ADP + phosphate + polyamineSide 2 + [polyamine-binding protein]Side 1.. Part of the ABC transporter complex PotABCD involved in spermidine/putrescine import. Responsible for energy coupling to the transport system. This Mycoplasma mycoides subsp. mycoides SC (strain CCUG 32753 / NCTC 10114 / PG1) protein is Spermidine/putrescine import ATP-binding protein PotA.